An 85-amino-acid chain; its full sequence is uncharacterized protein (85 aa).

Helical transmembrane passes span 16 to 34 (WALSLSILYVIGWCLCAYL) and 50 to 71 (LSCIYLPILFIVIGHWIIKIIF).

It to E.coli YhdT.

It is found in the cell membrane. This is an uncharacterized protein from Haemophilus influenzae (strain ATCC 51907 / DSM 11121 / KW20 / Rd).